We begin with the raw amino-acid sequence, 535 residues long: CTP synthase (535 aa).

The segment at 1-267 (MTKYIFVTGG…DQIVCDHLKL (267 aa)) is amidoligase domain. Serine 13 serves as a coordination point for CTP. Serine 13 lines the UTP pocket. Residue 14-19 (SLGKGI) coordinates ATP. Residue tyrosine 54 participates in L-glutamine binding. Aspartate 71 contacts ATP. Mg(2+) is bound by residues aspartate 71 and glutamate 141. Residues 148-150 (DIE), 188-193 (KTKPTQ), and lysine 224 each bind CTP. UTP-binding positions include 188–193 (KTKPTQ) and lysine 224. 240–242 (RDA) is an ATP binding site. The Glutamine amidotransferase type-1 domain maps to 292-534 (KIALVGKYVE…VRASITNKES (243 aa)). Glycine 354 provides a ligand contact to L-glutamine. The Nucleophile; for glutamine hydrolysis role is filled by cysteine 381. L-glutamine contacts are provided by residues 382–385 (LGMQ), glutamate 405, and arginine 462. Catalysis depends on residues histidine 507 and glutamate 509.

The protein belongs to the CTP synthase family. Homotetramer.

The enzyme catalyses UTP + L-glutamine + ATP + H2O = CTP + L-glutamate + ADP + phosphate + 2 H(+). It carries out the reaction L-glutamine + H2O = L-glutamate + NH4(+). It catalyses the reaction UTP + NH4(+) + ATP = CTP + ADP + phosphate + 2 H(+). The protein operates within pyrimidine metabolism; CTP biosynthesis via de novo pathway; CTP from UDP: step 2/2. Its activity is regulated as follows. Allosterically activated by GTP, when glutamine is the substrate; GTP has no effect on the reaction when ammonia is the substrate. The allosteric effector GTP functions by stabilizing the protein conformation that binds the tetrahedral intermediate(s) formed during glutamine hydrolysis. Inhibited by the product CTP, via allosteric rather than competitive inhibition. Catalyzes the ATP-dependent amination of UTP to CTP with either L-glutamine or ammonia as the source of nitrogen. Regulates intracellular CTP levels through interactions with the four ribonucleotide triphosphates. The polypeptide is CTP synthase (Bacillus cereus (strain AH820)).